Reading from the N-terminus, the 114-residue chain is Protein ORF3 (114 aa).

2 hydrophobic regions span residues 6 to 22 (CDLG…CLCC) and 33 to 53 (AVVG…GLIL). The interaction with host HPX stretch occupies residues 28–68 (VSRLAAVVGGAAAVPAVVSGVTGLILSPSQSPIFIQPTPSP). An interaction with the capsid protein region spans residues 48-72 (VTGLILSPSQSPIFIQPTPSPPMSP). The residue at position 71 (Ser71) is a Phosphoserine; by host. The segment at 72 to 114 (PLRPGLDLVFANQPDHSAPLGVTRPSAPPLPHVVDLPQLGPRR) is homodimerization, and interaction with host AMBP/bikunin. Residues 91 to 114 (LGVTRPSAPPLPHVVDLPQLGPRR) are disordered. The interval 95-104 (RPSAPPLPHV) is interaction with host SRC, HCK, FYN, PIK3R3 and GRB2. Residues 96 to 99 (PSAP) carry the PTAP/PSAP motif motif.

It belongs to the hepevirus ORF3 protein family. Forms homooligomers. Interacts with host SRC, HCK, FYN, PIK3R3 and GRB2 (via SH3 domain); binding does not activate the kinases. Interacts with host AMBP/bikunin and AMBP/alpha-1-microglobulin peptides. Interacts with host HPX/hemopexin. Interacts (when phosphorylated) with capsid protein ORF2. Interacts with host TSG101; this interaction plays a role in viral release from the host cell. Interacts with host SIRPA; this interaction down-regulates the phosphorylation of host IRF3. Palmitoylated in the N-terminus.

The protein localises to the host endoplasmic reticulum membrane. It is found in the host cytoplasm. Its subcellular location is the host cytoskeleton. The protein resides in the virion. It localises to the host cell membrane. Its function is as follows. Small multifunctional phosphoprotein involved in virion morphogenesis, egress and counteracting host innate immunity. Plays critical roles in the final steps of viral release by interacting with host TSG101, a member of the vacuolar protein-sorting pathway and using other cellular host proteins involved in vesicle formation pathway. Also acts as a viroporin and forms ion conductive pores allowing viral particle release. Impairs the generation of type I interferon by down-regulating host TLR3 and TLR7 as well as their downstream signaling pathways. Down-regulates the phosphorylation of host IRF3 via the interaction with host SIRP-alpha, thereby inhibiting IFN-I expression. Interacts with host microtubules. This Homo sapiens (Human) protein is Protein ORF3.